A 273-amino-acid chain; its full sequence is Dermonecrotic toxin LdSicTox-alphaIB3avi (273 aa).

Residue His-5 is part of the active site. The Mg(2+) site is built by Glu-25 and Asp-27. His-41 (nucleophile) is an active-site residue. 2 cysteine pairs are disulfide-bonded: Cys-45–Cys-51 and Cys-47–Cys-190. Residue Asp-85 coordinates Mg(2+).

The protein belongs to the arthropod phospholipase D family. Class II subfamily. It depends on Mg(2+) as a cofactor. As to expression, expressed by the venom gland.

The protein localises to the secreted. The enzyme catalyses an N-(acyl)-sphingosylphosphocholine = an N-(acyl)-sphingosyl-1,3-cyclic phosphate + choline. The catalysed reaction is an N-(acyl)-sphingosylphosphoethanolamine = an N-(acyl)-sphingosyl-1,3-cyclic phosphate + ethanolamine. It catalyses the reaction a 1-acyl-sn-glycero-3-phosphocholine = a 1-acyl-sn-glycero-2,3-cyclic phosphate + choline. It carries out the reaction a 1-acyl-sn-glycero-3-phosphoethanolamine = a 1-acyl-sn-glycero-2,3-cyclic phosphate + ethanolamine. In terms of biological role, dermonecrotic toxins cleave the phosphodiester linkage between the phosphate and headgroup of certain phospholipids (sphingolipid and lysolipid substrates), forming an alcohol (often choline) and a cyclic phosphate. This toxin acts on sphingomyelin (SM). It may also act on ceramide phosphoethanolamine (CPE), lysophosphatidylcholine (LPC) and lysophosphatidylethanolamine (LPE), but not on lysophosphatidylserine (LPS), and lysophosphatidylglycerol (LPG). It acts by transphosphatidylation, releasing exclusively cyclic phosphate products as second products. Induces dermonecrosis, hemolysis, increased vascular permeability, edema, inflammatory response, and platelet aggregation. The polypeptide is Dermonecrotic toxin LdSicTox-alphaIB3avi (Loxosceles deserta (Desert recluse spider)).